The primary structure comprises 141 residues: uncharacterized protein (141 aa).

The protein belongs to the mimivirus L163/R849 family.

This is an uncharacterized protein from Acanthamoeba polyphaga mimivirus (APMV).